We begin with the raw amino-acid sequence, 435 residues long: Plant UBX domain-containing protein 6 (435 aa).

3 disordered regions span residues 1-150 (MDVN…PQKV), 208-265 (ENYT…EDQP), and 311-352 (PTTT…SMSS). The segment covering 49 to 62 (TSSFSTFDGSSGYS) has biased composition (low complexity). A compositionally biased stretch (basic and acidic residues) spans 112–129 (AVEHYGGEENRAIERPEQ). The segment covering 130 to 141 (SSRSMSEETVSS) has biased composition (low complexity). The SEP 1 domain maps to 150–211 (VFTHTVTSWS…IISREEENYT (62 aa)). A compositionally biased stretch (polar residues) spans 211 to 222 (TESQAGSDSAST). Residues 231–242 (RAKESAIERSEQ) are compositionally biased toward basic and acidic residues. Residues 252–265 (DSAELQEQQQEDQP) are compositionally biased toward acidic residues. The region spanning 268-343 (VVTYTVTIWR…ESTSTEPPLT (76 aa)) is the SEP 2 domain. Composition is skewed to low complexity over residues 312–323 (TTTRSTSCSSQT) and 333–349 (SEST…QPPS). Residues 357-434 (PAAPTTSIQL…GIANSVLVQK (78 aa)) enclose the UBX domain.

This Arabidopsis thaliana (Mouse-ear cress) protein is Plant UBX domain-containing protein 6.